The sequence spans 211 residues: MKSIVSVLTLLLLINAVAALRFVLPAKDKNELPFCVRDFVKNGELVVVTVESPKYADGQQLSVVVRDAHGNEYTRIKNVLGREITTFSSHQDTALDVCFHNVANSHQDLGKTKEIDLSVAIGANARDWEQIQASEKLKPAEVQLRKIEEIVDEVDKEMNYLKMREIRLRDTNESTNRRVKFFSVGITLALIALGVWQIIYLRSYFRSKHII.

The N-terminal stretch at 1–19 is a signal peptide; that stretch reads MKSIVSVLTLLLLINAVAA. At 20 to 180 the chain is on the lumenal side; it reads LRFVLPAKDK…TNESTNRRVK (161 aa). The region spanning 33–121 is the GOLD domain; the sequence is PFCVRDFVKN…TKEIDLSVAI (89 aa). Residues 181-201 form a helical membrane-spanning segment; that stretch reads FFSVGITLALIALGVWQIIYL. The Cytoplasmic segment spans residues 202–211; sequence RSYFRSKHII.

This sequence belongs to the EMP24/GP25L family.

It localises to the endoplasmic reticulum membrane. The protein localises to the golgi apparatus membrane. Its function is as follows. Constituent of COPII-coated endoplasmic reticulum-derived transport vesicles. Required for efficient transport of a subset of secretory proteins to the Golgi. Facilitates retrograde transport from the Golgi to the endoplasmic reticulum. The sequence is that of Endoplasmic reticulum vesicle protein 25 (ERV25) from Yarrowia lipolytica (strain CLIB 122 / E 150) (Yeast).